Here is a 37-residue protein sequence, read N- to C-terminus: MKVQPSVKKICEKCKVIRRHGRVMVICDNLRHKQRQG.

The protein belongs to the bacterial ribosomal protein bL36 family.

The polypeptide is Large ribosomal subunit protein bL36 (Nocardia farcinica (strain IFM 10152)).